Reading from the N-terminus, the 268-residue chain is Undecaprenyl-diphosphatase (268 aa).

7 consecutive transmembrane segments (helical) span residues F47–L67, F83–S103, L109–V129, F144–V164, A184–F204, I218–L238, and F246–M266.

The protein belongs to the UppP family.

Its subcellular location is the cell inner membrane. The catalysed reaction is di-trans,octa-cis-undecaprenyl diphosphate + H2O = di-trans,octa-cis-undecaprenyl phosphate + phosphate + H(+). Its function is as follows. Catalyzes the dephosphorylation of undecaprenyl diphosphate (UPP). Confers resistance to bacitracin. The polypeptide is Undecaprenyl-diphosphatase (Rhodopseudomonas palustris (strain BisB5)).